The chain runs to 306 residues: Small ribosomal subunit protein uS2 (306 aa).

Residues 229–238 (GEESAAEERP) show a composition bias toward basic and acidic residues. The interval 229-306 (GEESAAEERP…VGEGDESEER (78 aa)) is disordered. Positions 261–287 (QPGEPEAEAFEEAAGEPEDSTEEEAAE) are enriched in acidic residues.

Belongs to the universal ribosomal protein uS2 family.

The chain is Small ribosomal subunit protein uS2 from Rubrobacter xylanophilus (strain DSM 9941 / JCM 11954 / NBRC 16129 / PRD-1).